Here is a 244-residue protein sequence, read N- to C-terminus: LexA repressor (244 aa).

The tract at residues 1 to 24 (MSDSSDTTVDGASDGASDGASGAD) is disordered. Residues 10–24 (DGASDGASDGASGAD) are compositionally biased toward low complexity. The segment at residues 58-78 (IREIGDAVGLTSTSSVAHQLR) is a DNA-binding region (H-T-H motif). Active-site for autocatalytic cleavage activity residues include Ser168 and Lys205.

This sequence belongs to the peptidase S24 family. Homodimer.

The catalysed reaction is Hydrolysis of Ala-|-Gly bond in repressor LexA.. Its function is as follows. Represses a number of genes involved in the response to DNA damage (SOS response), including recA and lexA. In the presence of single-stranded DNA, RecA interacts with LexA causing an autocatalytic cleavage which disrupts the DNA-binding part of LexA, leading to derepression of the SOS regulon and eventually DNA repair. This Mycobacterium marinum (strain ATCC BAA-535 / M) protein is LexA repressor.